Consider the following 100-residue polypeptide: Putative antiporter subunit mnhF2 (100 aa).

3 helical membrane-spanning segments follow: residues 5–25 (FTQI…LVCL), 38–60 (VVSF…VIFN), and 65–87 (LDSI…RFIG).

Belongs to the CPA3 antiporters (TC 2.A.63) subunit F family. In terms of assembly, may form a heterooligomeric complex that consists of seven subunits: mnhA2, mnhB2, mnhC2, mnhD2, mnhE2, mnhF2 and mnhG2.

The protein localises to the cell membrane. The polypeptide is Putative antiporter subunit mnhF2 (mnhF2) (Staphylococcus epidermidis (strain ATCC 35984 / DSM 28319 / BCRC 17069 / CCUG 31568 / BM 3577 / RP62A)).